We begin with the raw amino-acid sequence, 528 residues long: MSDNTPTPQKNPDTNPYASLISQQIAIIPSFTLESGVTLNNVPVAYKTWGKLNEKADNCLVICHALTGSADVEDWWGPLLGLNKAFDPTRFFIFCGNVIGSPYGTISSVTTNPETGKPFGPEMPGSSVKDDVRLHYIILKSLGVRSVAAVVGGSMGGMTVLEYPLNTPPGFVRAIIPLATSARHSAWCISWGEAQRQSIYSDPDYKDGYYYEIEEEGGKVDLARQPARGLAAARMAALLTYRSRDSFESRFGRRAGGGKSSVPKGGVRIMGGQETTDPSVPSESDLAAKSPSWRAWREHNDGHRSAGARPISRSGSEGPAHREGDAAQAEVVKTQDVKANGNKIGTGGEAPPKIFSAQSYLRYQGDKFTGRFDANCYIHITRKLDTHDLSAPSRDTSLSSLSSGLPSSPDATEEELNARLIHALSLEPPALVIGIESDGLFTTSEQRELAAGIPDAELVVIPSPDGHDGFLLEFEAINGWVEGWLKRKMPEFYERRVINPEEYVQGEEGFGIKKESVFGEAEADVTRW.

The AB hydrolase-1 domain maps to 60-245 (LVICHALTGS…AALLTYRSRD (186 aa)). Ser-154 serves as the catalytic Nucleophile. Disordered stretches follow at residues 250-335 (RFGR…VKTQ) and 388-413 (DLSAPSRDTSLSSLSSGLPSSPDATE). A compositionally biased stretch (polar residues) spans 273–282 (QETTDPSVPS). Basic and acidic residues predominate over residues 295–304 (AWREHNDGHR). Over residues 389-409 (LSAPSRDTSLSSLSSGLPSSP) the composition is skewed to low complexity. Active-site residues include Asp-438 and His-467.

It belongs to the AB hydrolase superfamily. MetX family.

Its subcellular location is the cytoplasm. It catalyses the reaction L-homoserine + acetyl-CoA = O-acetyl-L-homoserine + CoA. It participates in amino-acid biosynthesis; L-methionine biosynthesis via de novo pathway; O-acetyl-L-homoserine from L-homoserine: step 1/1. With respect to regulation, inhibited by 6-carbamoyl-3a,4,5,9b-tetrahydro-3H-cyclopenta[ c]quinoline-4-carboxylic acid (CTCQC). Commits homoserine to the methionine biosynthesis pathway by catalyzing its O-acetylation. The sequence is that of Homoserine O-acetyltransferase from Cryptococcus neoformans var. grubii serotype A (strain H99 / ATCC 208821 / CBS 10515 / FGSC 9487) (Filobasidiella neoformans var. grubii).